We begin with the raw amino-acid sequence, 766 residues long: Dipeptidyl peptidase 4 (766 aa).

At 1 to 6 (MKTPWK) the chain is on the cytoplasmic side. A helical; Signal-anchor for type II membrane protein membrane pass occupies residues 7 to 28 (VLLGLLGAAALVTIITVPVVLL). Over 29–766 (NKGTDDATAD…HFIKQCFSLP (738 aa)) the chain is Extracellular. N-linked (GlcNAc...) asparagine glycans are attached at residues asparagine 85, asparagine 92, asparagine 150, asparagine 219, asparagine 229, asparagine 281, and asparagine 321. 4 disulfide bridges follow: cysteine 328–cysteine 339, cysteine 385–cysteine 394, cysteine 444–cysteine 447, and cysteine 454–cysteine 472. The N-linked (GlcNAc...) asparagine glycan is linked to asparagine 520. Serine 630 (charge relay system) is an active-site residue. An intrachain disulfide couples cysteine 649 to cysteine 762. The N-linked (GlcNAc...) asparagine glycan is linked to asparagine 685. Active-site charge relay system residues include aspartate 708 and histidine 740.

It belongs to the peptidase S9B family. DPPIV subfamily. As to quaternary structure, monomer. Homodimer. Heterodimer with Seprase (FAP). Requires homodimerization for optimal dipeptidyl peptidase activity and T-cell costimulation. Found in a membrane raft complex, at least composed of BCL10, CARD11, DPP4 and IKBKB. Associates with collagen. Interacts with PTPRC; the interaction is enhanced in an interleukin-12-dependent manner in activated lymphocytes. Interacts (via extracellular domain) with ADA; does not inhibit its dipeptidyl peptidase activity. Interacts with CAV1 (via the N-terminus); the interaction is direct. Interacts (via cytoplasmic tail) with CARD11 (via PDZ domain); its homodimerization is necessary for interaction with CARD11. Interacts with IGF2R; the interaction is direct. Interacts with GPC3. Interacts with human coronavirus-EMC spike protein and acts as a receptor for this virus. In terms of assembly, (Microbial infection) Interacts with MERS coronavirus/MERS-CoV spike protein. Post-translationally, the soluble form (Dipeptidyl peptidase 4 soluble form also named SDPP) derives from the membrane form (Dipeptidyl peptidase 4 membrane form also named MDPP) by proteolytic processing. In terms of processing, N- and O-Glycosylated. Phosphorylated. Mannose 6-phosphate residues in the carbohydrate moiety are necessary for interaction with IGF2R in activated T-cells. Mannose 6-phosphorylation is induced during T-cell activation. Expressed specifically in lymphatic vessels but not in blood vessels in the skin, small intestine, esophagus, ovary, breast and prostate glands. Not detected in lymphatic vessels in the lung, kidney, uterus, liver and stomach (at protein level). Expressed in the poorly differentiated crypt cells of the small intestine as well as in the mature villous cells. Expressed at very low levels in the colon.

It localises to the secreted. The protein localises to the cell membrane. Its subcellular location is the apical cell membrane. The protein resides in the cell projection. It is found in the invadopodium membrane. It localises to the lamellipodium membrane. The protein localises to the cell junction. Its subcellular location is the membrane raft. The catalysed reaction is Release of an N-terminal dipeptide, Xaa-Yaa-|-Zaa-, from a polypeptide, preferentially when Yaa is Pro, provided Zaa is neither Pro nor hydroxyproline.. Its activity is regulated as follows. Inhibited by GPC3 and diprotin A. In terms of biological role, cell surface glycoprotein receptor involved in the costimulatory signal essential for T-cell receptor (TCR)-mediated T-cell activation. Acts as a positive regulator of T-cell coactivation, by binding at least ADA, CAV1, IGF2R, and PTPRC. Its binding to CAV1 and CARD11 induces T-cell proliferation and NF-kappa-B activation in a T-cell receptor/CD3-dependent manner. Its interaction with ADA also regulates lymphocyte-epithelial cell adhesion. In association with FAP is involved in the pericellular proteolysis of the extracellular matrix (ECM), the migration and invasion of endothelial cells into the ECM. May be involved in the promotion of lymphatic endothelial cells adhesion, migration and tube formation. When overexpressed, enhanced cell proliferation, a process inhibited by GPC3. Also acts as a serine exopeptidase with a dipeptidyl peptidase activity that regulates various physiological processes by cleaving peptides in the circulation, including many chemokines, mitogenic growth factors, neuropeptides and peptide hormones such as brain natriuretic peptide 32. Removes N-terminal dipeptides sequentially from polypeptides having unsubstituted N-termini provided that the penultimate residue is proline. Its function is as follows. (Microbial infection) Acts as a receptor for human coronavirus MERS-CoV-2. In Homo sapiens (Human), this protein is Dipeptidyl peptidase 4.